The chain runs to 138 residues: Acidic phospholipase A2 Cvv-E6a (138 aa).

The signal sequence occupies residues 1 to 16 (MRTLWIVAVLLLGVEG). 7 cysteine pairs are disulfide-bonded: Cys-42–Cys-131, Cys-44–Cys-60, Cys-59–Cys-111, Cys-65–Cys-138, Cys-66–Cys-104, Cys-73–Cys-97, and Cys-91–Cys-102. Ca(2+)-binding residues include Tyr-43, Gly-45, and Gly-47. Residue His-63 is part of the active site. Asp-64 contributes to the Ca(2+) binding site. Residue Asp-105 is part of the active site.

This sequence belongs to the phospholipase A2 family. Group II subfamily. D49 sub-subfamily. It depends on Ca(2+) as a cofactor. In terms of tissue distribution, expressed by the venom gland.

It localises to the secreted. The enzyme catalyses a 1,2-diacyl-sn-glycero-3-phosphocholine + H2O = a 1-acyl-sn-glycero-3-phosphocholine + a fatty acid + H(+). Its function is as follows. Snake venom phospholipase A2 (PLA2) that significantly inhibits ADP-induced platelet aggregation in platelet-rich plasma of human, rabbit and guinea pig. PLA2 catalyzes the calcium-dependent hydrolysis of the 2-acyl groups in 3-sn-phosphoglycerides. This Crotalus viridis viridis (Prairie rattlesnake) protein is Acidic phospholipase A2 Cvv-E6a.